Reading from the N-terminus, the 495-residue chain is MDEFQRDGTNHRSWQQFFLYPLFFREDLYAIAHDHHLDRSSSSEPIEILISNYFSFLTVKRLIRRIRQQNDSIGLFGNCDPIQFIDRNRNSYSEPVLEALTVILEVSFAMRSKHFAETMSGWKSIRSIHCIFPLIEDKFPHSNYISDIRVPYSIHPEILVRTFRRWIRDTPSLHLLRFILHEWRNSFSAENLQKALVVPRENMRLSLFLWNSYVYECESFLVPLLKRFYRSRSLLYGSFPNRTHFDRKIKHIVIFPINISTKRIWLLKDSFIHYVRYGERSLIALKGTHLQVKKCRYHLFHFWQYYFHLWSQPYRICILELSKNDSFFLGYFLSFKIKPLVVRTKMLDDLFITDLVTNELNPISPIRSILLFLAKEKFCDISGHPISKLSWTSLTDDDILDRFDRICINLFHYYSGSINKDGLYYIKYILLLPCAKTLACKHKSTIRVVREESGSELFTKSFFKEQEFISSSFSKTRSQRERFWNSDIIQIKCPI.

It belongs to the intron maturase 2 family. MatK subfamily.

The protein localises to the plastid. Its subcellular location is the chloroplast. Usually encoded in the trnK tRNA gene intron. Probably assists in splicing its own and other chloroplast group II introns. The protein is Maturase K of Torreya californica (California nutmeg).